Here is a 274-residue protein sequence, read N- to C-terminus: Orotidine 5'-phosphate decarboxylase (274 aa).

Residue lysine 95 is the Proton donor of the active site.

It belongs to the OMP decarboxylase family. Type 2 subfamily.

The enzyme catalyses orotidine 5'-phosphate + H(+) = UMP + CO2. Its pathway is pyrimidine metabolism; UMP biosynthesis via de novo pathway; UMP from orotate: step 2/2. The polypeptide is Orotidine 5'-phosphate decarboxylase (pyrF) (Mycobacterium bovis (strain ATCC BAA-935 / AF2122/97)).